A 139-amino-acid polypeptide reads, in one-letter code: Translation initiation factor 2 subunit beta (139 aa).

It belongs to the eIF-2-beta/eIF-5 family. Heterotrimer composed of an alpha, a beta and a gamma chain.

Its function is as follows. eIF-2 functions in the early steps of protein synthesis by forming a ternary complex with GTP and initiator tRNA. This is Translation initiation factor 2 subunit beta from Saccharolobus islandicus (strain Y.N.15.51 / Yellowstone #2) (Sulfolobus islandicus).